The primary structure comprises 84 residues: Toxin To5 (84 aa).

The N-terminal stretch at 1–19 (MKAIIFFIGCLMLIDLVAG) is a signal peptide. An LCN-type CS-alpha/beta domain is found at 21–82 (RSGYPVTQKG…IWGSYPNNCG (62 aa)). Intrachain disulfides connect cysteine 31-cysteine 81, cysteine 35-cysteine 57, cysteine 43-cysteine 62, and cysteine 47-cysteine 64. The residue at position 81 (cysteine 81) is a Cysteine amide.

Expressed by the venom gland.

It is found in the secreted. Beta toxins bind voltage-independently at site-4 of sodium channels (Nav) and shift the voltage of activation toward more negative potentials thereby affecting sodium channel activation and promoting spontaneous and repetitive firing. The polypeptide is Toxin To5 (Tityus obscurus (Amazonian scorpion)).